The primary structure comprises 461 residues: MTPNSMTENGLPAWDKQKPRPDRGQDWKLVGMSEACLHRKSHVERRGALKNEQTSPHLIQATWTSSIFHLDPDDVNDQSISSAQTFQTEEKKCKGYIPSYLDKDELCVVCGDKATGYHYRCITCEGCKGFFRRTIQKSLHPSYSCKYEGKCIIDKVTRNQCQECRFKKCIYVGMATDLVLDDSKRLAKRKLIEENREKRRREELQKSIGHKPEPTDEEWELIKTVTEAHVATNAQGSHWKQKRKFLPEDIGQAPIVNAPEGGKVDLEAFSHFTKIITPAITRVVDFAKKLPMFCELPCEDQIILLKGCCMEIMSLRAAVRYDPDSETLTLNGEMAVTRGQLKNGGLGVVSDAIFDLGMSLSSFNLDDTEVALLQAVLLMSSDRPGLACVERIEKYQDSFLLAFEHYINYRKHHVTHFWPKLLMKVTDLRMIGACHASRFLHMKVECPTELFPPLFLEVFED.

Residues 1–24 (MTPNSMTENGLPAWDKQKPRPDRG) form a disordered region. Residues 1–106 (MTPNSMTENG…IPSYLDKDEL (106 aa)) are modulating. Positions 15 to 24 (DKQKPRPDRG) are enriched in basic and acidic residues. Positions 107, 110, 124, 127, 145, 151, 161, and 164 each coordinate Zn(2+). NR C4-type zinc fingers lie at residues 107–127 (CVVC…CEGC) and 145–169 (CKYE…FKKC). Positions 107 to 181 (CVVCGDKATG…VGMATDLVLD (75 aa)) form a DNA-binding region, nuclear receptor. An NR LBD domain is found at 217–461 (EEWELIKTVT…PPLFLEVFED (245 aa)). Residues 244 to 461 (KFLPEDIGQA…PPLFLEVFED (218 aa)) form an interaction with NR2F6 region. The 3,3',5-triiodo-L-thyronine site is built by R282, N331, and H435. Positions 282, 331, and 435 each coordinate L-thyroxine.

The protein belongs to the nuclear hormone receptor family. NR1 subfamily. In terms of assembly, binds DNA as a dimer; homodimer and heterodimer with RXRB. Interacts with the coactivators NCOA1/SRC1, NCOA2/GRIP1, NCOA7 and MED1/TRAP220 in a ligand-inducible manner. Interacts with the corepressor NCOR1 in absence of ligand. Interacts with C1D. Interacts with NR2F6; the interaction impairs the binding of the THRB homodimer and THRB:RXRB heterodimer to T3 response elements. Interacts with PRMT2 and THRSP. Interacts with TACC1; this interaction is decreased in the presence of thyroid hormone T3.

The protein resides in the nucleus. Its function is as follows. Nuclear hormone receptor that can act as a repressor or activator of transcription. High affinity receptor for thyroid hormones, including triiodothyronine and thyroxine. This Mus musculus (Mouse) protein is Thyroid hormone receptor beta (Thrb).